The chain runs to 571 residues: PHD and RING finger domain-containing protein C126.07c (571 aa).

The RING-type 1; atypical zinc finger occupies 18–79 (CIICLSNLPN…RVANTCPLCR (62 aa)). The segment at 122 to 170 (TCRCVICGRSDHAEVLLLCDGCDDAYHTYCLNMDAVPIEEFYCPNCVLL) adopts a PHD-type zinc-finger fold. The RING-type 2; degenerate zinc finger occupies 125–168 (CVICGRSDHAEVLLLCDGCDDAYHTYCLNMDAVPIEEFYCPNCV). Residues 305–324 (ATEATISNPRPSSGRFQQTP) show a composition bias toward polar residues. Residues 305 to 377 (ATEATISNPR…VLGNNSSSKS (73 aa)) are disordered. Over residues 346 to 356 (RRQKRPTRRHI) the composition is skewed to basic residues. Over residues 359-377 (SNKSSGSSTVLGNNSSSKS) the composition is skewed to polar residues.

The protein resides in the cytoplasm. It localises to the nucleus. The chain is PHD and RING finger domain-containing protein C126.07c from Schizosaccharomyces pombe (strain 972 / ATCC 24843) (Fission yeast).